The following is a 273-amino-acid chain: Dermonecrotic toxin LhSicTox-alphaIA2avi (273 aa).

His-5 is an active-site residue. Residues Glu-25 and Asp-27 each contribute to the Mg(2+) site. The active-site Nucleophile is the His-41. 2 disulfide bridges follow: Cys-45/Cys-51 and Cys-47/Cys-190. Residue Asp-85 coordinates Mg(2+).

The protein belongs to the arthropod phospholipase D family. Class II subfamily. Mg(2+) serves as cofactor. Expressed by the venom gland.

Its subcellular location is the secreted. The catalysed reaction is an N-(acyl)-sphingosylphosphocholine = an N-(acyl)-sphingosyl-1,3-cyclic phosphate + choline. It carries out the reaction an N-(acyl)-sphingosylphosphoethanolamine = an N-(acyl)-sphingosyl-1,3-cyclic phosphate + ethanolamine. The enzyme catalyses a 1-acyl-sn-glycero-3-phosphocholine = a 1-acyl-sn-glycero-2,3-cyclic phosphate + choline. It catalyses the reaction a 1-acyl-sn-glycero-3-phosphoethanolamine = a 1-acyl-sn-glycero-2,3-cyclic phosphate + ethanolamine. Dermonecrotic toxins cleave the phosphodiester linkage between the phosphate and headgroup of certain phospholipids (sphingolipid and lysolipid substrates), forming an alcohol (often choline) and a cyclic phosphate. This toxin acts on sphingomyelin (SM). It may also act on ceramide phosphoethanolamine (CPE), lysophosphatidylcholine (LPC) and lysophosphatidylethanolamine (LPE), but not on lysophosphatidylserine (LPS), and lysophosphatidylglycerol (LPG). It acts by transphosphatidylation, releasing exclusively cyclic phosphate products as second products. Induces dermonecrosis, hemolysis, increased vascular permeability, edema, inflammatory response, and platelet aggregation. This chain is Dermonecrotic toxin LhSicTox-alphaIA2avi, found in Loxosceles hirsuta (Recluse spider).